The sequence spans 449 residues: DNA-directed RNA polymerase subunit Rpo1C (449 aa).

The unknown stretch occupies residues 1 to 68 (MQDVIKKIED…EGEELLKAVE (68 aa)). Residues 69–449 (DEYLRILKVR…TGSVSVIMKK (381 aa)) form a DNA-directed RNA polymerase subunit Rpo1C region.

It belongs to the RNA polymerase beta' chain family. In terms of assembly, part of the RNA polymerase complex.

Its subcellular location is the cytoplasm. It carries out the reaction RNA(n) + a ribonucleoside 5'-triphosphate = RNA(n+1) + diphosphate. In terms of biological role, DNA-dependent RNA polymerase (RNAP) catalyzes the transcription of DNA into RNA using the four ribonucleoside triphosphates as substrates. Forms part of the jaw domain. This chain is DNA-directed RNA polymerase subunit Rpo1C, found in Methanothermobacter thermautotrophicus (strain Winter) (Methanobacterium thermoautotrophicum).